The following is a 294-amino-acid chain: 4-hydroxy-tetrahydrodipicolinate synthase (294 aa).

Thr-47 is a binding site for pyruvate. Residue Tyr-135 is the Proton donor/acceptor of the active site. Catalysis depends on Lys-163, which acts as the Schiff-base intermediate with substrate. Val-205 lines the pyruvate pocket.

It belongs to the DapA family. In terms of assembly, homotetramer; dimer of dimers.

It is found in the cytoplasm. The catalysed reaction is L-aspartate 4-semialdehyde + pyruvate = (2S,4S)-4-hydroxy-2,3,4,5-tetrahydrodipicolinate + H2O + H(+). It functions in the pathway amino-acid biosynthesis; L-lysine biosynthesis via DAP pathway; (S)-tetrahydrodipicolinate from L-aspartate: step 3/4. Its function is as follows. Catalyzes the condensation of (S)-aspartate-beta-semialdehyde [(S)-ASA] and pyruvate to 4-hydroxy-tetrahydrodipicolinate (HTPA). This is 4-hydroxy-tetrahydrodipicolinate synthase from Rickettsia canadensis (strain McKiel).